The chain runs to 315 residues: Cytochrome c biogenesis protein CcsA (315 aa).

7 helical membrane-spanning segments follow: residues 17-37, 72-92, 101-121, 146-166, 221-241, 255-272, and 282-302; these read LGFA…WAVA, ISNL…AQLF, IVSA…SFVL, VIMC…GVFL, SITA…VWAN, TWAL…HTRI, and AILA…VNLL.

Belongs to the CcmF/CycK/Ccl1/NrfE/CcsA family. May interact with ccs1.

The protein localises to the cellular thylakoid membrane. Required during biogenesis of c-type cytochromes (cytochrome c6 and cytochrome f) at the step of heme attachment. The protein is Cytochrome c biogenesis protein CcsA of Prochlorococcus marinus (strain NATL2A).